Reading from the N-terminus, the 629-residue chain is DNA topoisomerase 4 subunit B (629 aa).

ATP is bound by residues Tyr-4, Asn-41, Asp-68, Gly-109–Ile-115, and Lys-333. Residues Ala-411–Pro-524 enclose the Toprim domain. Positions 417, 489, and 491 each coordinate Mg(2+).

Belongs to the type II topoisomerase family. ParE type 1 subfamily. Heterotetramer composed of ParC and ParE. Mg(2+) serves as cofactor. The cofactor is Mn(2+). Requires Ca(2+) as cofactor.

The enzyme catalyses ATP-dependent breakage, passage and rejoining of double-stranded DNA.. In terms of biological role, topoisomerase IV is essential for chromosome segregation. It relaxes supercoiled DNA. Performs the decatenation events required during the replication of a circular DNA molecule. The sequence is that of DNA topoisomerase 4 subunit B from Pseudomonas aeruginosa (strain ATCC 15692 / DSM 22644 / CIP 104116 / JCM 14847 / LMG 12228 / 1C / PRS 101 / PAO1).